We begin with the raw amino-acid sequence, 82 residues long: uncharacterized protein (82 aa).

2 helical membrane-spanning segments follow: residues 8–28 (LLSAAGILLLALLSCLLLPAP) and 50–70 (LYTVLFCLWFLALGAIEYLVL).

It is found in the cell membrane. This is an uncharacterized protein from Klebsiella pneumoniae.